The following is a 425-amino-acid chain: Pectate lyase L (425 aa).

The N-terminal stretch at 1-25 (MKYLNCFISTGLAAFFLVNSTSVLA) is a signal peptide. A disulfide bridge connects residues Cys-28 and Cys-114. Residues Asp-209, Asp-233, Asp-234, and Asp-237 each contribute to the Ca(2+) site. The active-site Proton acceptor is Lys-273. Residues Asn-402, Ser-413, Ala-416, Asp-418, and Glu-423 each contribute to the Ca(2+) site.

Belongs to the polysaccharide lyase 9 family. The cofactor is Ca(2+).

Its subcellular location is the secreted. It carries out the reaction Eliminative cleavage of (1-&gt;4)-alpha-D-galacturonan to give oligosaccharides with 4-deoxy-alpha-D-galact-4-enuronosyl groups at their non-reducing ends.. It functions in the pathway glycan metabolism; pectin degradation; 2-dehydro-3-deoxy-D-gluconate from pectin: step 2/5. Its function is as follows. Presents an endo-cleaving activity on polygalacturonate or partially methylated pectin. The chain is Pectate lyase L (pelL) from Dickeya chrysanthemi (Pectobacterium chrysanthemi).